We begin with the raw amino-acid sequence, 344 residues long: Dihydroorotate dehydrogenase (quinone) (344 aa).

FMN is bound by residues 61–65 (AGLDK) and Thr85. Lys65 is a binding site for substrate. A substrate-binding site is contributed by 110-114 (NRMGF). Positions 138 and 171 each coordinate FMN. Asn171 is a binding site for substrate. Ser174 acts as the Nucleophile in catalysis. Asn176 lines the substrate pocket. FMN is bound by residues Lys216 and Thr244. 245 to 246 (NT) is a substrate binding site. Residues Gly267, Gly296, and 317-318 (YS) contribute to the FMN site.

Belongs to the dihydroorotate dehydrogenase family. Type 2 subfamily. Monomer. Requires FMN as cofactor.

The protein resides in the cell membrane. It carries out the reaction (S)-dihydroorotate + a quinone = orotate + a quinol. Its pathway is pyrimidine metabolism; UMP biosynthesis via de novo pathway; orotate from (S)-dihydroorotate (quinone route): step 1/1. Functionally, catalyzes the conversion of dihydroorotate to orotate with quinone as electron acceptor. This is Dihydroorotate dehydrogenase (quinone) from Psychrobacter sp. (strain PRwf-1).